A 54-amino-acid chain; its full sequence is Light-harvesting protein B-870 beta chain (54 aa).

The Cytoplasmic portion of the chain corresponds to 1–20; the sequence is EVKQESLSGITEGEAKEFHK. A bacteriochlorophyll-binding residues include His19 and His37. A helical membrane pass occupies residues 21-43; the sequence is IFTSSILVFFGVAAFAHLLVWIW. At 44–54 the chain is on the periplasmic side; that stretch reads RPWVPGPNGYS.

The protein belongs to the antenna complex beta subunit family. As to quaternary structure, the core complex is formed by different alpha and beta chains, binding bacteriochlorophyll molecules, and arranged most probably in tetrameric structures disposed around the reaction center. The non-pigmented gamma chains may constitute additional components.

It localises to the cell inner membrane. Antenna complexes are light-harvesting systems, which transfer the excitation energy to the reaction centers. The sequence is that of Light-harvesting protein B-870 beta chain from Rhodospirillum rubrum.